We begin with the raw amino-acid sequence, 134 residues long: Ribosome-binding factor A (134 aa).

This sequence belongs to the RbfA family. Monomer. Binds 30S ribosomal subunits, but not 50S ribosomal subunits or 70S ribosomes.

The protein localises to the cytoplasm. Functionally, one of several proteins that assist in the late maturation steps of the functional core of the 30S ribosomal subunit. Associates with free 30S ribosomal subunits (but not with 30S subunits that are part of 70S ribosomes or polysomes). Required for efficient processing of 16S rRNA. May interact with the 5'-terminal helix region of 16S rRNA. This Parasynechococcus marenigrum (strain WH8102) protein is Ribosome-binding factor A.